A 149-amino-acid chain; its full sequence is Angiogenin (149 aa).

The N-terminal stretch at 1–24 is a signal peptide; the sequence is MVMGLGPLVLIFVLGLGVTPPTLA. Q25 carries the pyrrolidone carboxylic acid modification. Residue H37 is the Proton acceptor of the active site. R45 contacts tRNA. Cystine bridges form between C50–C105, C63–C116, and C81–C131. Positions 55–59 match the Nucleolar localization signal motif; sequence KRRDL. Positions 105 and 127 each coordinate tRNA. The active-site Proton donor is the H138.

This sequence belongs to the pancreatic ribonuclease family. Homodimer. Interacts with RNH1; inhibiting ANG ribonuclease activity. Interacts with PCNA.

The protein localises to the secreted. The protein resides in the nucleus. Its subcellular location is the nucleolus. It is found in the cytoplasm. It localises to the stress granule. With respect to regulation, has weak tRNA ribonuclease activity by itself due to partial autoinhibition by its C-terminus, which folds into a short alpha-helix that partially occludes the substrate-binding site. In absence of stress, the ribonuclease activity is inhibited by RNH1 in the cytoplasm. In response to stress, dissociates from RNH1 in the cytoplasm and associates with cytoplasmic ribosomes with vacant A-sites: ribosomes directly activate the tRNA ribonuclease activity of ANG by refolding the C-terminal alpha-helix. In response to stress, the angiogenic activity of ANG is inhibited by RNH1 in the nucleus. Its function is as follows. Secreted ribonuclease that can either promote or restrict cell proliferation of target cells, depending on the context. Endocytosed in target cells via its receptor PLXNB2 and translocates to the cytoplasm or nucleus. Under stress conditions, localizes to the cytoplasm and promotes the assembly of stress granules (SGs): specifically cleaves a subset of tRNAs within anticodon loops to produce tRNA-derived stress-induced fragments (tiRNAs), resulting in translation repression and inhibition of cell proliferation. tiRNas also prevent formation of apoptosome, thereby promoting cell survival. Preferentially cleaves RNAs between a pyrimidine and an adenosine residue, suggesting that it cleaves the anticodon loop of tRNA(Ala) (32-UUAGCAU-38) after positions 33 and 36. Cleaves a subset of tRNAs, including tRNA(Ala), tRNA(Glu), tRNA(Gly), tRNA(Lys), tRNA(Val), tRNA(His), tRNA(Asp) and tRNA(Sec). Under growth conditions and in differentiated cells, translocates to the nucleus and stimulates ribosomal RNA (rRNA) transcription, including that containing the initiation site sequences of 45S rRNA, thereby promoting cell growth and proliferation. Angiogenin induces vascularization of normal and malignant tissues via its ability to promote rRNA transcription. Involved in hematopoietic stem and progenitor cell (HSPC) growth and survival by promoting rRNA transcription in growth conditions and inhibiting translation in response to stress, respectively. Mediates the crosstalk between myeloid and intestinal epithelial cells to protect the intestinal epithelial barrier integrity: secreted by myeloid cells and promotes intestinal epithelial cells proliferation and survival. Also mediates osteoclast-endothelial cell crosstalk in growing bone: produced by osteoclasts and protects the neighboring vascular cells against senescence by promoting rRNA transcription. This is Angiogenin (ANG) from Oryctolagus cuniculus (Rabbit).